Here is a 107-residue protein sequence, read N- to C-terminus: Benzene 1,2-dioxygenase system ferredoxin subunit (107 aa).

In terms of domain architecture, Rieske spans 4–99 (TYILRQSDLP…IKVEGDEVHV (96 aa)). Cys43, His45, Cys62, and His65 together coordinate [2Fe-2S] cluster.

This sequence belongs to the bacterial ring-hydroxylating dioxygenase ferredoxin component family. This dioxygenase system consists of four proteins: the two subunits of the hydroxylase component (BnzA and BnzB), a ferredoxin (BnzC) and a ferredoxin reductase (BnzD).

It participates in aromatic compound metabolism; benzene degradation; catechol from benzene: step 1/2. In terms of biological role, this protein seems to be a 2Fe-2S ferredoxin. The sequence is that of Benzene 1,2-dioxygenase system ferredoxin subunit (bnzC) from Pseudomonas putida (Arthrobacter siderocapsulatus).